Here is a 391-residue protein sequence, read N- to C-terminus: 3-ketoacyl-CoA thiolase (391 aa).

Cys-95 (acyl-thioester intermediate) is an active-site residue. Active-site proton acceptor residues include His-347 and Cys-377.

The protein belongs to the thiolase-like superfamily. Thiolase family. In terms of assembly, heterotetramer of two alpha chains (FadB) and two beta chains (FadA).

It is found in the cytoplasm. The catalysed reaction is an acyl-CoA + acetyl-CoA = a 3-oxoacyl-CoA + CoA. The protein operates within lipid metabolism; fatty acid beta-oxidation. Its function is as follows. Catalyzes the final step of fatty acid oxidation in which acetyl-CoA is released and the CoA ester of a fatty acid two carbons shorter is formed. This chain is 3-ketoacyl-CoA thiolase, found in Pseudomonas putida (Arthrobacter siderocapsulatus).